The sequence spans 254 residues: Agamous-like MADS-box protein AGL9 homolog (254 aa).

The MADS-box domain maps to 3 to 57; it reads RGRVELKRIENKINRQVTFAKRRNGLLKKAYELSVLCDAEVALIIFSNRGKLYEF. The K-box domain occupies 91–181; it reads ELSSQQEYLK…RLRLADGYQM (91 aa).

Its subcellular location is the nucleus. Its function is as follows. Probable transcription factor active in inflorescence development and floral organogenesis. In Sinapis alba (White mustard), this protein is Agamous-like MADS-box protein AGL9 homolog (AGL9).